The sequence spans 429 residues: Adenylosuccinate synthetase (429 aa).

GTP contacts are provided by residues 12-18 (GDEGKGK) and 40-42 (GHT). Asp-13 functions as the Proton acceptor in the catalytic mechanism. The Mg(2+) site is built by Asp-13 and Gly-40. IMP is bound by residues 13–16 (DEGK), 38–41 (NAGH), Thr-129, Arg-143, Gln-223, Thr-238, and Arg-302. His-41 (proton donor) is an active-site residue. 298–304 (TVTGRKR) provides a ligand contact to substrate. Residues Arg-304, 330–332 (KLD), and 412–414 (STS) contribute to the GTP site.

The protein belongs to the adenylosuccinate synthetase family. In terms of assembly, homodimer. Mg(2+) serves as cofactor.

It is found in the cytoplasm. It carries out the reaction IMP + L-aspartate + GTP = N(6)-(1,2-dicarboxyethyl)-AMP + GDP + phosphate + 2 H(+). Its pathway is purine metabolism; AMP biosynthesis via de novo pathway; AMP from IMP: step 1/2. Functionally, plays an important role in the de novo pathway of purine nucleotide biosynthesis. Catalyzes the first committed step in the biosynthesis of AMP from IMP. The chain is Adenylosuccinate synthetase from Novosphingobium aromaticivorans (strain ATCC 700278 / DSM 12444 / CCUG 56034 / CIP 105152 / NBRC 16084 / F199).